The chain runs to 179 residues: Large ribosomal subunit protein uL5 (179 aa).

The protein belongs to the universal ribosomal protein uL5 family. In terms of assembly, part of the 50S ribosomal subunit; part of the 5S rRNA/L5/L18/L25 subcomplex. Contacts the 5S rRNA and the P site tRNA. Forms a bridge to the 30S subunit in the 70S ribosome.

This is one of the proteins that bind and probably mediate the attachment of the 5S RNA into the large ribosomal subunit, where it forms part of the central protuberance. In the 70S ribosome it contacts protein S13 of the 30S subunit (bridge B1b), connecting the 2 subunits; this bridge is implicated in subunit movement. Contacts the P site tRNA; the 5S rRNA and some of its associated proteins might help stabilize positioning of ribosome-bound tRNAs. The polypeptide is Large ribosomal subunit protein uL5 (Shouchella clausii (strain KSM-K16) (Alkalihalobacillus clausii)).